Consider the following 340-residue polypeptide: Phosphate acyltransferase (340 aa).

The interval 285 to 340 (WRQSGRPARHRGQEPRRHRQPRFWLCHRRGRRRSPRQRNRTHPGTGQPPAGCAGAR) is disordered. Over residues 300–325 (RRHRQPRFWLCHRRGRRRSPRQRNRT) the composition is skewed to basic residues.

Belongs to the PlsX family. In terms of assembly, homodimer. Probably interacts with PlsY.

The protein localises to the cytoplasm. The enzyme catalyses a fatty acyl-[ACP] + phosphate = an acyl phosphate + holo-[ACP]. Its pathway is lipid metabolism; phospholipid metabolism. In terms of biological role, catalyzes the reversible formation of acyl-phosphate (acyl-PO(4)) from acyl-[acyl-carrier-protein] (acyl-ACP). This enzyme utilizes acyl-ACP as fatty acyl donor, but not acyl-CoA. The chain is Phosphate acyltransferase from Laribacter hongkongensis (strain HLHK9).